Consider the following 244-residue polypeptide: Ras-like protein family member 11B (244 aa).

Residues proline 19 to threonine 242 form a small GTPase-like region. GTP-binding positions include glycine 30–threonine 37, aspartate 77–valine 81, and asparagine 142–aspartate 145. Residues isoleucine 200 to asparagine 222 are disordered.

The protein belongs to the small GTPase superfamily. Ras family.

It carries out the reaction GTP + H2O = GDP + phosphate + H(+). This chain is Ras-like protein family member 11B, found in Danio rerio (Zebrafish).